The following is a 185-amino-acid chain: Large ribosomal subunit protein uL10 (185 aa).

The disordered stretch occupies residues 165 to 185 (LRAKKEEQGGAGTPAPAEAAE).

Belongs to the universal ribosomal protein uL10 family. In terms of assembly, part of the ribosomal stalk of the 50S ribosomal subunit. The N-terminus interacts with L11 and the large rRNA to form the base of the stalk. The C-terminus forms an elongated spine to which L12 dimers bind in a sequential fashion forming a multimeric L10(L12)X complex.

Functionally, forms part of the ribosomal stalk, playing a central role in the interaction of the ribosome with GTP-bound translation factors. In Streptomyces griseus subsp. griseus (strain JCM 4626 / CBS 651.72 / NBRC 13350 / KCC S-0626 / ISP 5235), this protein is Large ribosomal subunit protein uL10.